A 218-amino-acid polypeptide reads, in one-letter code: Adenylate kinase (218 aa).

10-15 (GAGKGT) contacts ATP. The interval 30 to 59 (STGDMLRAAVKAGTPLGLQAKAVMDSGSLV) is NMP. AMP-binding positions include Thr31, Arg36, 57–59 (SLV), 85–88 (GFPR), and Gln92. Positions 122-159 (GRRSHPASGRTYHVRFNPPKIDGKDDLTGEALLQREDD) are LID. ATP contacts are provided by residues Arg123 and 132 to 133 (TY). Arg156 and Arg167 together coordinate AMP. Residue Gly203 participates in ATP binding.

Belongs to the adenylate kinase family. In terms of assembly, monomer.

Its subcellular location is the cytoplasm. The enzyme catalyses AMP + ATP = 2 ADP. It participates in purine metabolism; AMP biosynthesis via salvage pathway; AMP from ADP: step 1/1. Catalyzes the reversible transfer of the terminal phosphate group between ATP and AMP. Plays an important role in cellular energy homeostasis and in adenine nucleotide metabolism. This Verminephrobacter eiseniae (strain EF01-2) protein is Adenylate kinase.